The primary structure comprises 549 residues: Phosphoenolpyruvate carboxykinase (ATP) (549 aa).

ATP is bound at residue 250 to 257; it reads GLSGTGKT.

Belongs to the phosphoenolpyruvate carboxykinase (ATP) family. Homotetramer.

It catalyses the reaction oxaloacetate + ATP = phosphoenolpyruvate + ADP + CO2. Its pathway is carbohydrate biosynthesis; gluconeogenesis. The protein is Phosphoenolpyruvate carboxykinase (ATP) (PCK1) of Saccharomyces cerevisiae (strain ATCC 204508 / S288c) (Baker's yeast).